We begin with the raw amino-acid sequence, 162 residues long: Nucleotide-binding protein ACIAD3137 (162 aa).

Belongs to the YajQ family.

In terms of biological role, nucleotide-binding protein. The sequence is that of Nucleotide-binding protein ACIAD3137 from Acinetobacter baylyi (strain ATCC 33305 / BD413 / ADP1).